A 451-amino-acid chain; its full sequence is AAA-ATPase At3g50940 (451 aa).

Positions 1–25 are cleaved as a signal peptide; the sequence is MSSSSESHLATAKTALTAVASVAAA. 254-261 contributes to the ATP binding site; that stretch reads GPPGTGKS.

The protein belongs to the AAA ATPase family. BCS1 subfamily. Mg(2+) is required as a cofactor.

The enzyme catalyses ATP + H2O = ADP + phosphate + H(+). This chain is AAA-ATPase At3g50940, found in Arabidopsis thaliana (Mouse-ear cress).